Consider the following 438-residue polypeptide: Transposon Ty2-C Gag polyprotein (438 aa).

3 stretches are compositionally biased toward polar residues: residues 1–11 (MESQQLHQNPR), 19–39 (ASVTSKEVPSNQDPLAVSASN), and 49–60 (KVNSQQETTPGT). Disordered stretches follow at residues 1 to 88 (MESQ…YQQH), 365 to 397 (NVSRTSPNTTNTKVTTRNYQRTNSSKPRAAKAH), and 419 to 438 (SSQYLSDDNELSLRPATERI). The segment at 295–397 (ENNINVSDRL…SSKPRAAKAH (103 aa)) is RNA-binding. Positions 369 to 382 (TSPNTTNTKVTTRN) are enriched in low complexity.

Homotrimer.

The protein resides in the cytoplasm. Functionally, capsid protein (CA) is the structural component of the virus-like particle (VLP), forming the shell that encapsulates the retrotransposons dimeric RNA genome. The particles are assembled from trimer-clustered units and there are holes in the capsid shells that allow for the diffusion of macromolecules. CA also has nucleocapsid-like chaperone activity, promoting primer tRNA(i)-Met annealing to the multipartite primer-binding site (PBS), dimerization of Ty2 RNA and initiation of reverse transcription. In Saccharomyces cerevisiae (strain ATCC 204508 / S288c) (Baker's yeast), this protein is Transposon Ty2-C Gag polyprotein (TY2A-C).